The sequence spans 269 residues: BAG family molecular chaperone regulator 4 (269 aa).

Residues Met-1–Ala-40 form a disordered region. A compositionally biased stretch (basic and acidic residues) spans Gln-21 to Gln-35. The Ubiquitin-like domain occupies Gln-46–Lys-122. The BAG domain maps to Ala-138–Lys-219. The disordered stretch occupies residues Ser-241–Asp-269.

In terms of assembly, binds to the ATPase domain of HSP70/HSC70 chaperones. Interacts with HSP70-1. Detected in stems, leaves, flowers and roots.

In terms of biological role, co-chaperone that regulates diverse cellular pathways, such as programmed cell death and stress responses. This is BAG family molecular chaperone regulator 4 (BAG4) from Arabidopsis thaliana (Mouse-ear cress).